The chain runs to 156 residues: Arginine repressor (156 aa).

This sequence belongs to the ArgR family.

Its subcellular location is the cytoplasm. The protein operates within amino-acid biosynthesis; L-arginine biosynthesis [regulation]. Its function is as follows. Regulates arginine biosynthesis genes. The polypeptide is Arginine repressor (Yersinia pseudotuberculosis serotype I (strain IP32953)).